The sequence spans 1213 residues: MKGMSHEPKSPSIGMLSTATRTTATVNPLTPSPLNGALVPTGSPATSSTLSAQAAPSSSFAAALRKLAKQAEEPRGSSLSSESSPVSSPATNHSSPASTPKRVPMGPIIVPPGGHSVPSTPPVVTIAPTKTVNGVWRSESRQDSGSRGSSSGRERLLVEPPLAQEKAAGPAIPSHLLSTPYPFGLSPGSVVQDSRFQPLNLQRPVHHVVPPSTVTEDYLRSFRPYHTAEDLRMSSLPPLGLDPATAAAYYHPSYLAPHPFPHPAFRMDDSYCLSALRSPFYPIPTPGSLPPLHPSAMHLHLSGVRYPPELSHSSLAALHSERMSSLSAERLQMDEELRREREREREREREADREREKEREREQREKEREKELEREREKERERELERQREQRAREKELLAAKALEPTTFLPVAELHGLRGHSTEERPKPSEQLTPTRAEKLKDVGLQAPKPVQHPLHPVPAPHHTVPSLISSHGIFSLPGSSATTALLIQRTNEEEKWLARQRRLRQEKEDRQSQVSEFRQQVLEQHLDLGRPLVPTEAEHRPESTRPGTNRHEQGSREPPQHFGGPPPLISPKPQQHTVPTALWNPVSLMDNALETRRAESHSLHSHPTAFEPSRQAAVPLVKVERVYCSEKAEEPRKREATPLDKYQPPPPPPPPREAGSLEPQTFPHGPGPFLTELEKSTQTILGQQRPSLSQATSFGELSGPLKPGSPYCHPTARGPDPAYIYDEFLQQRRKLVSKLDLEERRRREAQEKGYYYDLDDSYDESDEEEVRAHLRCVAEQPPLKLDTSSEKLEFLQLFGLTTQQQKEELVAQKRRKRRRMLRERSPSPPAVQCKRQTPSPRLALSTRYSPDEMNNSPNFEEKRKFLTFFNLTHISAEKRKDKERLVEMLRAMKQRALSAADSVTNSSRDSPPVSLSEPATQPAPLETDQPVGVPASLSDVPKTTETGRLEQLRPQELLRVQEPAPPSGEKARLSEAPGGKKSLSMLHYLRGAAPKDIPVPLSHSINGKSKPWEPFVAEEFAHQFHESVLQSTQKALQKHKGNSALLSAEQSHKVDTAIHYNIPELQSSSRVPLPQHNGQQEPPMGRKGPPMQEADQDSEEDSEEDSEEEAEEAPRRQWQGIEAIFEAYQEHIEEQNLERQVLQTQCRRLEAQNYSLSLTAEQLSHSMAELRSQKQKMVSERERLQAELDHLRKCLALPTMHWPRGYFKGYPR.

The disordered stretch occupies residues 1-154 (MKGMSHEPKS…GSRGSSSGRE (154 aa)). Phosphoserine is present on S10. The span at 15–33 (MLSTATRTTATVNPLTPSP) shows a compositional bias: polar residues. Composition is skewed to low complexity over residues 51–63 (SAQA…FAAA) and 76–89 (GSSL…VSSP). Phosphoserine is present on residues S84 and S95. The segment covering 103–114 (VPMGPIIVPPGG) has biased composition (low complexity). The residue at position 305 (R305) is an Asymmetric dimethylarginine. Residues 319 to 402 (HSERMSSLSA…REKELLAAKA (84 aa)) are a coiled coil. The segment at 326–384 (LSAERLQMDEELRREREREREREREADREREKEREREQREKEREKELEREREKEREREL) is disordered. Residues 331-384 (LQMDEELRREREREREREREADREREKEREREQREKEREKELEREREKEREREL) are compositionally biased toward basic and acidic residues. The residue at position 433 (T433) is a Phosphothreonine. At K496 the chain carries N6-acetyllysine. Disordered regions lie at residues 527 to 579 (LDLG…QHTV) and 630 to 719 (SEKA…TARG). Composition is skewed to basic and acidic residues over residues 537–560 (EAEH…REPP) and 630–643 (SEKA…EATP). Pro residues predominate over residues 648 to 657 (QPPPPPPPPR). Positions 681–700 (STQTILGQQRPSLSQATSFG) are enriched in polar residues. K739 carries the post-translational modification N6-acetyllysine. Phosphoserine occurs at positions 766, 826, 828, and 857. Disordered regions lie at residues 816–858 (RKRR…NNSP), 898–979 (LSAA…EAPG), and 1065–1118 (ELQS…PRRQ). Polar residues predominate over residues 847-858 (TRYSPDEMNNSP). Residue T905 is modified to Phosphothreonine. Residue S907 is modified to Phosphoserine. Residues 1065-1081 (ELQSSSRVPLPQHNGQQ) are compositionally biased toward polar residues. A coiled-coil region spans residues 1093–1197 (QEADQDSEED…ELDHLRKCLA (105 aa)). Over residues 1095–1112 (ADQDSEEDSEEDSEEEAE) the composition is skewed to acidic residues. S1099 is subject to Phosphoserine.

May be a component of a BHC histone deacetylase complex that contains HDAC1, HDAC2, HMG20B/BRAF35, KDM1A, RCOR1/CoREST, PHF21A/BHC80, ZMYM2, ZNF217, ZMYM3, GSE1 and GTF2I.

This chain is Genetic suppressor element 1 (Gse1), found in Mus musculus (Mouse).